A 218-amino-acid chain; its full sequence is Thiopurine S-methyltransferase (218 aa).

Positions 10, 45, 66, and 123 each coordinate S-adenosyl-L-methionine.

Belongs to the class I-like SAM-binding methyltransferase superfamily. TPMT family.

It is found in the cytoplasm. It catalyses the reaction S-adenosyl-L-methionine + a thiopurine = S-adenosyl-L-homocysteine + a thiopurine S-methylether.. The protein is Thiopurine S-methyltransferase of Shewanella sp. (strain ANA-3).